A 566-amino-acid chain; its full sequence is Glutamate--tRNA ligase (566 aa).

A 'HIGH' region motif is present at residues 104-114 (PNPDGPLHLGN).

This sequence belongs to the class-I aminoacyl-tRNA synthetase family. Glutamate--tRNA ligase type 2 subfamily.

It localises to the cytoplasm. The enzyme catalyses tRNA(Glu) + L-glutamate + ATP = L-glutamyl-tRNA(Glu) + AMP + diphosphate. In terms of biological role, catalyzes the attachment of glutamate to tRNA(Glu) in a two-step reaction: glutamate is first activated by ATP to form Glu-AMP and then transferred to the acceptor end of tRNA(Glu). This is Glutamate--tRNA ligase from Metallosphaera sedula (strain ATCC 51363 / DSM 5348 / JCM 9185 / NBRC 15509 / TH2).